The sequence spans 328 residues: RNA binding protein fox-1 homolog 3 (328 aa).

Positions 1–30 (MAQPYPPAQYPPPPQNGIPAEYAPPPPHPT) are enriched in pro residues. The tract at residues 1-106 (MAQPYPPAQY…QPKRLHVSNI (106 aa)) is disordered. A compositionally biased stretch (polar residues) spans 49–87 (TPAQTHPEQPSSDTSTQPITGAQTVPQTDEAAQTDSQPL). One can recognise an RRM domain in the interval 99 to 172 (KRLHVSNIPF…NPVVGAVYGP (74 aa)). Asymmetric dimethylarginine; alternate is present on Arg-192. Arg-192 is subject to Omega-N-methylarginine; alternate. Arg-288 carries the post-translational modification Asymmetric dimethylarginine.

It localises to the nucleus. Its subcellular location is the cytoplasm. Functionally, pre-mRNA alternative splicing regulator. Regulates alternative splicing of RBFOX2 to enhance the production of mRNA species that are targeted for nonsense-mediated decay (NMD). This chain is RNA binding protein fox-1 homolog 3 (RBFOX3), found in Bos taurus (Bovine).